Here is a 727-residue protein sequence, read N- to C-terminus: Malate synthase G (727 aa).

Acetyl-CoA-binding positions include Val-117, 124–125 (RY), Ser-275, and Arg-312. The Proton acceptor role is filled by Arg-339. Glyoxylate is bound by residues Arg-339, Glu-431, and 456 to 459 (GFLD). Mg(2+) contacts are provided by Glu-431 and Asp-459. Pro-540 provides a ligand contact to acetyl-CoA. The residue at position 616 (Cys-616) is a Cysteine sulfenic acid (-SOH). The active-site Proton donor is Asp-630.

It belongs to the malate synthase family. GlcB subfamily. In terms of assembly, monomer. The cofactor is Mg(2+).

It is found in the cytoplasm. It catalyses the reaction glyoxylate + acetyl-CoA + H2O = (S)-malate + CoA + H(+). It functions in the pathway carbohydrate metabolism; glyoxylate cycle; (S)-malate from isocitrate: step 2/2. Involved in the glycolate utilization. Catalyzes the condensation and subsequent hydrolysis of acetyl-coenzyme A (acetyl-CoA) and glyoxylate to form malate and CoA. This is Malate synthase G from Halalkalibacterium halodurans (strain ATCC BAA-125 / DSM 18197 / FERM 7344 / JCM 9153 / C-125) (Bacillus halodurans).